The primary structure comprises 105 residues: MIASKFGIGQQVRHKLFGYLGVIIDVDPEYSLDKPYIDKIAADDSLRTAPWYHVVMEDEDGKPVHTYLAEAQLGYEAFLEHPEQPTLDELAESIRLQLQAPRLRN.

It belongs to the HspQ family.

The protein localises to the cytoplasm. Functionally, involved in the degradation of certain denaturated proteins, including DnaA, during heat shock stress. This chain is Heat shock protein HspQ, found in Baumannia cicadellinicola subsp. Homalodisca coagulata.